We begin with the raw amino-acid sequence, 317 residues long: Putative pyridoxal kinase BUD17 (317 aa).

Substrate is bound by residues Ser-16 and Tyr-128. ATP is bound by residues 190 to 191 and 220 to 232; these read TS and EIPKINAKFSGSG. Asp-233 serves as a coordination point for substrate.

It belongs to the pyridoxine kinase family. Requires a divalent metal cation as cofactor.

The protein resides in the cytoplasm. The protein localises to the nucleus. The catalysed reaction is pyridoxal + ATP = pyridoxal 5'-phosphate + ADP + H(+). Functionally, required for synthesis of pyridoxal-5-phosphate from vitamin B6. Important for bud site selection. This chain is Putative pyridoxal kinase BUD17 (BUD17), found in Saccharomyces cerevisiae (strain ATCC 204508 / S288c) (Baker's yeast).